Reading from the N-terminus, the 270-residue chain is Glucan endo-1,3-beta-glucosidase (270 aa).

A signal peptide spans 1 to 18; the sequence is MNAFTFPLLLAFCAFAHG. In terms of domain architecture, GH16 spans 22 to 270; the sequence is LDWEDEFNGG…VEYVKKWTWN (249 aa). Glu-137 serves as the catalytic Nucleophile. Catalysis depends on Glu-142, which acts as the Proton donor.

This sequence belongs to the glycosyl hydrolase 16 family.

The protein localises to the secreted. The enzyme catalyses Hydrolysis of (1-&gt;3)-beta-D-glucosidic linkages in (1-&gt;3)-beta-D-glucans.. Ca(2+) does not affect the enzyme activity nor the thermostability. Other cations, such as Mg(2+), Mn(2+), Cu(2+), Zn(2+), Ag(+) or Hg(2+) do not cause any serious adverse effect on the activity. Also no significant change in the activity in response to the addition of 1 mM EDTA. Hydrolyzes laminarin majorily to glucose (G1), laminaribiose (L2), laminaritriose (L3), laminaritetraose (L4) and laminaripentaose (L5). Hydrolyzes laminarioligosaccharides L3, L4, L5 and laminarihexaose (L6) to G1, L2 and L3. Hardly hydrolyzes L2. Does not hydrolyze lichenan, pustulan, carboxymethyl cellulose, locust bean gum or soluble starch. The protein is Glucan endo-1,3-beta-glucosidase of Cryptopygus antarcticus (Antarctic springtail).